Reading from the N-terminus, the 424-residue chain is Catabolic NAD-specific glutamate dehydrogenase RocG (424 aa).

Residues K80 and K104 each coordinate substrate. Residue K116 is the Proton donor of the active site. Residues T200 and N231 each contribute to the NAD(+) site. A substrate-binding site is contributed by S358.

Belongs to the Glu/Leu/Phe/Val dehydrogenases family. In terms of assembly, homohexamer. Interacts with transcriptional regulator GltC.

It carries out the reaction L-glutamate + NAD(+) + H2O = 2-oxoglutarate + NH4(+) + NADH + H(+). Devoted to catabolic function of glutamate (and other amino acids of the glutamate family) utilization as sole nitrogen source. It is not involved in anabolic function of glutamate biosynthesis since B.subtilis possesses only one route of glutamate biosynthesis from ammonia, catalyzed by glutamate synthase. Wild-type cells are unable to utilize glutamate or glutamine as a sole carbon source; thus RocG does not function physiologically to synthesize glutamate, but it is involved in the utilization of arginine, and proline as carbon or nitrogen source. The catabolic RocG is essential for controlling gltAB expression via an inhibitory interactions with the transcriptional regulator GltC in response to the availability of sugars. The polypeptide is Catabolic NAD-specific glutamate dehydrogenase RocG (Bacillus subtilis (strain 168)).